Consider the following 214-residue polypeptide: Large ribosomal subunit protein uL1 (214 aa).

This sequence belongs to the universal ribosomal protein uL1 family. Part of the 50S ribosomal subunit.

Functionally, binds directly to 23S rRNA. Probably involved in E site tRNA release. Its function is as follows. Protein L1 is also a translational repressor protein, it controls the translation of its operon by binding to its mRNA. This is Large ribosomal subunit protein uL1 from Methanoregula boonei (strain DSM 21154 / JCM 14090 / 6A8).